The sequence spans 788 residues: Integrin beta-6 (788 aa).

A signal peptide spans 1-21 (MGIELLCFFFLFLGRDDHVRG). Positions 22–71 (GCAMEGAETCGDCLLIGPQCAWCSQENFTHPSGVSERCDTPANLLAKGCQ) constitute a PSI domain. Topologically, residues 22–709 (GCAMEGAETC…KDCPKPPNIP (688 aa)) are extracellular. 19 cysteine pairs are disulfide-bonded: C23/C41, C31/C454, C34/C59, C44/C70, C197/C204, C252/C293, C394/C406, C426/C452, C456/C476, C467/C479, C481/C490, C492/C519, C502/C517, C511/C522, C524/C537, C539/C560, C544/C558, C552/C563, and C565/C574. N-linked (GlcNAc...) asparagine glycans are attached at residues N48 and N97. In terms of domain architecture, VWFA spans 131-371 (YPVDLYYLMD…QLIISAYEEL (241 aa)). Residues D140, S142, and S144 each contribute to the Mg(2+) site. Ca(2+) is bound by residues S144, D147, D148, and E179. Ca(2+)-binding residues include N235, D237, P239, and E240. E240 serves as a coordination point for Mg(2+). N260 carries N-linked (GlcNAc...) asparagine glycosylation. Positions 271 and 355 each coordinate Ca(2+). 3 N-linked (GlcNAc...) asparagine glycosylation sites follow: N387, N396, and N418. 4 I-EGF domains span residues 456 to 491 (CQKE…PHCE), 492 to 538 (CGED…PYCQ), 539 to 575 (CDNF…EYCN), and 576 to 615 (CTTS…PTCE). N-linked (GlcNAc...) asparagine glycosylation is found at N463 and N471. N541 is a glycosylation site (N-linked (GlcNAc...) asparagine). An N-linked (GlcNAc...) asparagine glycan is attached at N575. Intrachain disulfides connect C576/C599, C583/C597, C591/C602, C604/C614, C617/C620, C624/C670, C630/C649, C633/C645, and C678/C702. Residue N696 is glycosylated (N-linked (GlcNAc...) asparagine). Residues 710–730 (MIMLGVSLAILLIGVVLLCIW) form a helical membrane-spanning segment. Positions 731 to 758 (KLLVSFHDRKEVAKFEAERSKAKWQTGT) are interaction with HAX1. Topologically, residues 731–788 (KLLVSFHDRKEVAKFEAERSKAKWQTGTNPLYRGSTSTFKNVTYKHRDKLKTDLSTDG) are cytoplasmic.

Belongs to the integrin beta chain family. As to quaternary structure, heterodimer of an alpha and a beta subunit. Interacts with FLNB. Interacts with HAX1. ITGAV:ITGB6 interacts with FBN1. ITGAV:ITGB6 interacts with TGFB1.

It localises to the cell membrane. The protein localises to the cell junction. It is found in the focal adhesion. Its function is as follows. Integrin alpha-V:beta-6 (ITGAV:ITGB6) is a receptor for fibronectin and cytotactin. It recognizes the sequence R-G-D in its ligands. ITGAV:ITGB6 acts as a receptor for fibrillin-1 (FBN1) and mediates R-G-D-dependent cell adhesion to FBN1. Integrin alpha-V:beta-6 (ITGAV:ITGB6) mediates R-G-D-dependent release of transforming growth factor beta-1 (TGF-beta-1) from regulatory Latency-associated peptide (LAP), thereby playing a key role in TGF-beta-1 activation. This is Integrin beta-6 (ITGB6) from Cavia porcellus (Guinea pig).